Consider the following 117-residue polypeptide: Large ribosomal subunit protein uL18 (117 aa).

This sequence belongs to the universal ribosomal protein uL18 family. Part of the 50S ribosomal subunit; part of the 5S rRNA/L5/L18/L25 subcomplex. Contacts the 5S and 23S rRNAs.

Its function is as follows. This is one of the proteins that bind and probably mediate the attachment of the 5S RNA into the large ribosomal subunit, where it forms part of the central protuberance. The chain is Large ribosomal subunit protein uL18 from Francisella tularensis subsp. novicida (strain U112).